Consider the following 87-residue polypeptide: Insulin-related peptide 1 (87 aa).

A signal peptide spans 1–19 (MKSFMVFVLIFACFSCYYA). A propeptide spanning residues 20–44 (QESTNFYCGRTLSRALAVLCYGAES) is cleaved from the precursor. Arg64 carries the post-translational modification Arginine amide. A propeptide spanning residues 68–87 (GPVDECCEKACSIQELMTYC) is cleaved from the precursor.

The protein belongs to the insulin family. As to expression, DAGWWIPQHGHHALAGVR-amide: Expressed in corpora cardiaca (CC), corpora allata (CA), antennal lobe (AL) and gnathal ganglion (GNG) (at protein level). Expression in CC and CA detected in most animals, in AL and GNG in few animals (at protein level).

Its subcellular location is the secreted. This Agrotis ipsilon (Black cutworm moth) protein is Insulin-related peptide 1.